The following is a 153-amino-acid chain: 6,7-dimethyl-8-ribityllumazine synthase (153 aa).

5-amino-6-(D-ribitylamino)uracil contacts are provided by residues phenylalanine 22, alanine 56 to glutamate 58, and threonine 80 to isoleucine 82. Serine 85–threonine 86 provides a ligand contact to (2S)-2-hydroxy-3-oxobutyl phosphate. Histidine 88 serves as the catalytic Proton donor. A 5-amino-6-(D-ribitylamino)uracil-binding site is contributed by phenylalanine 113. Arginine 127 contacts (2S)-2-hydroxy-3-oxobutyl phosphate.

The protein belongs to the DMRL synthase family. Forms an icosahedral capsid composed of 60 subunits, arranged as a dodecamer of pentamers.

It catalyses the reaction (2S)-2-hydroxy-3-oxobutyl phosphate + 5-amino-6-(D-ribitylamino)uracil = 6,7-dimethyl-8-(1-D-ribityl)lumazine + phosphate + 2 H2O + H(+). The protein operates within cofactor biosynthesis; riboflavin biosynthesis; riboflavin from 2-hydroxy-3-oxobutyl phosphate and 5-amino-6-(D-ribitylamino)uracil: step 1/2. Functionally, catalyzes the formation of 6,7-dimethyl-8-ribityllumazine by condensation of 5-amino-6-(D-ribitylamino)uracil with 3,4-dihydroxy-2-butanone 4-phosphate. This is the penultimate step in the biosynthesis of riboflavin. The sequence is that of 6,7-dimethyl-8-ribityllumazine synthase from Glaesserella parasuis serovar 5 (strain SH0165) (Haemophilus parasuis).